A 245-amino-acid polypeptide reads, in one-letter code: Tegument protein UL51 homolog (245 aa).

Residue C10 is the site of S-palmitoyl cysteine; by host attachment. The segment at 225–245 (PVKSNLKSKHKPKRKASLVAV) is disordered. Over residues 230–245 (LKSKHKPKRKASLVAV) the composition is skewed to basic residues.

This sequence belongs to the herpesviridae UL51 family. In terms of assembly, oligomerizes. Interacts with ORF55; this interaction mediates ORF55 incorporation to virions. Phosphorylated. Post-translationally, palmitoylation is necessary for Golgi localization.

The protein resides in the virion tegument. It localises to the host cytoplasm. Its subcellular location is the host Golgi apparatus. In terms of biological role, plays several roles during the time course of infection, including egress of virus particles from the perinuclear space and secondary envelopment of cytoplasmic capsids that bud into specific trans-Golgi network (TGN)-derived membranes. This chain is Tegument protein UL51 homolog, found in Equine herpesvirus 1 (strain Ab4p) (EHV-1).